The chain runs to 43 residues: Subtilosin-A (43 aa).

The propeptide occupies 1-8 (MKKAVIVE). The segment at residues 9-43 (NKGCATCSIGAACLVDGPIPDFEIAGATGLFGLWG) is a cross-link (cyclopeptide (Asn-Gly)). Residues 12-39 (CATCSIGAACLVDGPIPDFEIAGATGLF) constitute a cross-link (2-cysteinyl-D-phenylalanine (Cys-Phe)). Positions 15–36 (CSIGAACLVDGPIPDFEIAGAT) form a cross-link, 2-cysteinyl-D-allo-threonine (Cys-Thr). The 2-cysteinyl-L-phenylalanine (Cys-Phe) cross-link spans 21–30 (CLVDGPIPDF).

The protein belongs to the bacteriocin class V family. Post-translationally, this sactipeptide undergoes unique processing steps that include proteolytic cleavage after Glu-8, and covalent linkage of the alpha-amino of Asn-9 with the carboxyl of Gly-43 to form a cyclopeptide. Thioether cross-links are formed between cysteines and the alpha-carbons of other amino acids, Cys-12 to Phe-39, Cys-15 to Thr-36, and Cys-21 to Phe-30. In forming these cross-links, Thr-36 and Phe-39 are converted to D-amino acids. Propeptide cleavage and cyclopeptide formation only occur after all 3 thioether cross-links are formed.

It is found in the secreted. Its function is as follows. Has bacteriocidal activity against some Gram-positive bacteria such as Listeria, some species of Bacillus and E.faecium. A single mutation (Thr-14-Ile) confers hemolytic activity against rabbit and human blood. The sequence is that of Subtilosin-A (sboA) from Bacillus subtilis (strain 168).